We begin with the raw amino-acid sequence, 255 residues long: Small ribosomal subunit protein eS1 (255 aa).

Ala2 bears the N-acetylalanine; partial mark.

The protein belongs to the eukaryotic ribosomal protein eS1 family. As to quaternary structure, component of the small ribosomal subunit. Mature ribosomes consist of a small (40S) and a large (60S) subunit. The 40S subunit contains about 33 different proteins and 1 molecule of RNA (18S). The 60S subunit contains about 49 different proteins and 3 molecules of RNA (25S, 5.8S and 5S).

Its subcellular location is the cytoplasm. This is Small ribosomal subunit protein eS1 from Kluyveromyces lactis (strain ATCC 8585 / CBS 2359 / DSM 70799 / NBRC 1267 / NRRL Y-1140 / WM37) (Yeast).